Consider the following 354-residue polypeptide: 5,10-methenyltetrahydromethanopterin hydrogenase (354 aa).

It belongs to the HMD family.

The enzyme catalyses 5,10-methenyl-5,6,7,8-tetrahydromethanopterin + H2 = 5,10-methylenetetrahydromethanopterin + H(+). The protein operates within one-carbon metabolism; methanogenesis from CO(2); 5,10-methylene-5,6,7,8-tetrahydromethanopterin from 5,10-methenyl-5,6,7,8-tetrahydromethanopterin (hydrogen route): step 1/1. Functionally, catalyzes the reversible reduction of methenyl-H(4)MPT(+) to methylene-H(4)MPT. In Methanococcus maripaludis (strain DSM 14266 / JCM 13030 / NBRC 101832 / S2 / LL), this protein is 5,10-methenyltetrahydromethanopterin hydrogenase.